The sequence spans 130 residues: Small ribosomal subunit protein bS6 (130 aa).

The disordered stretch occupies residues valine 96–glutamate 130. A compositionally biased stretch (basic and acidic residues) spans lysine 104–aspartate 118. Acidic residues predominate over residues arginine 119–glutamate 130.

It belongs to the bacterial ribosomal protein bS6 family.

Functionally, binds together with bS18 to 16S ribosomal RNA. The protein is Small ribosomal subunit protein bS6 of Shewanella denitrificans (strain OS217 / ATCC BAA-1090 / DSM 15013).